Consider the following 428-residue polypeptide: Tyrosine--tRNA ligase (428 aa).

L-tyrosine is bound at residue Y36. The short motif at 41-50 (PTARSLHIGS) is the 'HIGH' region element. Residues Y169 and Q173 each contribute to the L-tyrosine site. A 'KMSKS' region motif is present at residues 229–233 (KMGKT). K232 serves as a coordination point for ATP. In terms of domain architecture, S4 RNA-binding spans 361–427 (IPAYEIMHEC…GKKKYMIIKV (67 aa)).

The protein belongs to the class-I aminoacyl-tRNA synthetase family. TyrS type 1 subfamily. Homodimer.

It localises to the cytoplasm. The catalysed reaction is tRNA(Tyr) + L-tyrosine + ATP = L-tyrosyl-tRNA(Tyr) + AMP + diphosphate + H(+). In terms of biological role, catalyzes the attachment of tyrosine to tRNA(Tyr) in a two-step reaction: tyrosine is first activated by ATP to form Tyr-AMP and then transferred to the acceptor end of tRNA(Tyr). In Syntrophus aciditrophicus (strain SB), this protein is Tyrosine--tRNA ligase.